Reading from the N-terminus, the 114-residue chain is Iron-sulfur cluster insertion protein ErpA (114 aa).

Residues Cys42, Cys106, and Cys108 each coordinate iron-sulfur cluster.

Belongs to the HesB/IscA family. As to quaternary structure, homodimer. Iron-sulfur cluster is required as a cofactor.

Required for insertion of 4Fe-4S clusters for at least IspG. The sequence is that of Iron-sulfur cluster insertion protein ErpA from Haemophilus influenzae (strain PittEE).